The following is a 437-amino-acid chain: F-box protein At3g62430 (437 aa).

The 49-residue stretch at 1–49 (MDRISNLPDGVIYRVISLLSTKEATCLKYTSKNWLNLVTIIPIAVFVDS) folds into the F-box domain.

This chain is F-box protein At3g62430, found in Arabidopsis thaliana (Mouse-ear cress).